A 182-amino-acid chain; its full sequence is NAD(P)H-quinone oxidoreductase subunit I, chloroplastic (182 aa).

2 consecutive 4Fe-4S ferredoxin-type domains span residues 52–81 (GRIH…VDWE) and 92–121 (KSYS…MTEE). [4Fe-4S] cluster contacts are provided by C61, C64, C67, C71, C101, C104, C107, and C111.

Belongs to the complex I 23 kDa subunit family. NDH is composed of at least 16 different subunits, 5 of which are encoded in the nucleus. Requires [4Fe-4S] cluster as cofactor.

The protein resides in the plastid. The protein localises to the chloroplast thylakoid membrane. The catalysed reaction is a plastoquinone + NADH + (n+1) H(+)(in) = a plastoquinol + NAD(+) + n H(+)(out). It catalyses the reaction a plastoquinone + NADPH + (n+1) H(+)(in) = a plastoquinol + NADP(+) + n H(+)(out). Functionally, NDH shuttles electrons from NAD(P)H:plastoquinone, via FMN and iron-sulfur (Fe-S) centers, to quinones in the photosynthetic chain and possibly in a chloroplast respiratory chain. The immediate electron acceptor for the enzyme in this species is believed to be plastoquinone. Couples the redox reaction to proton translocation, and thus conserves the redox energy in a proton gradient. This chain is NAD(P)H-quinone oxidoreductase subunit I, chloroplastic, found in Chaetosphaeridium globosum (Charophycean green alga).